We begin with the raw amino-acid sequence, 284 residues long: Bifunctional protein FolD (284 aa).

166-168 serves as a coordination point for NADP(+); that stretch reads GAS.

Belongs to the tetrahydrofolate dehydrogenase/cyclohydrolase family. As to quaternary structure, homodimer.

The catalysed reaction is (6R)-5,10-methylene-5,6,7,8-tetrahydrofolate + NADP(+) = (6R)-5,10-methenyltetrahydrofolate + NADPH. It carries out the reaction (6R)-5,10-methenyltetrahydrofolate + H2O = (6R)-10-formyltetrahydrofolate + H(+). The protein operates within one-carbon metabolism; tetrahydrofolate interconversion. Catalyzes the oxidation of 5,10-methylenetetrahydrofolate to 5,10-methenyltetrahydrofolate and then the hydrolysis of 5,10-methenyltetrahydrofolate to 10-formyltetrahydrofolate. In Legionella pneumophila (strain Paris), this protein is Bifunctional protein FolD.